Here is a 357-residue protein sequence, read N- to C-terminus: N-acetyl-gamma-glutamyl-phosphate reductase (357 aa).

The active site involves Cys-160.

Belongs to the NAGSA dehydrogenase family. Type 1 subfamily.

The protein resides in the cytoplasm. It catalyses the reaction N-acetyl-L-glutamate 5-semialdehyde + phosphate + NADP(+) = N-acetyl-L-glutamyl 5-phosphate + NADPH + H(+). It functions in the pathway amino-acid biosynthesis; L-arginine biosynthesis; N(2)-acetyl-L-ornithine from L-glutamate: step 3/4. In terms of biological role, catalyzes the NADPH-dependent reduction of N-acetyl-5-glutamyl phosphate to yield N-acetyl-L-glutamate 5-semialdehyde. This is N-acetyl-gamma-glutamyl-phosphate reductase from Parasynechococcus marenigrum (strain WH8102).